The chain runs to 221 residues: Octanoyltransferase (221 aa).

The BPL/LPL catalytic domain maps to glutamate 35 to lysine 221. Residues arginine 80–histidine 87, alanine 152–glycine 154, and glycine 165–alanine 167 contribute to the substrate site. Residue cysteine 183 is the Acyl-thioester intermediate of the active site.

The protein belongs to the LipB family.

It is found in the cytoplasm. The catalysed reaction is octanoyl-[ACP] + L-lysyl-[protein] = N(6)-octanoyl-L-lysyl-[protein] + holo-[ACP] + H(+). It participates in protein modification; protein lipoylation via endogenous pathway; protein N(6)-(lipoyl)lysine from octanoyl-[acyl-carrier-protein]: step 1/2. Functionally, catalyzes the transfer of endogenously produced octanoic acid from octanoyl-acyl-carrier-protein onto the lipoyl domains of lipoate-dependent enzymes. Lipoyl-ACP can also act as a substrate although octanoyl-ACP is likely to be the physiological substrate. In Bacteroides fragilis (strain ATCC 25285 / DSM 2151 / CCUG 4856 / JCM 11019 / LMG 10263 / NCTC 9343 / Onslow / VPI 2553 / EN-2), this protein is Octanoyltransferase.